A 267-amino-acid chain; its full sequence is Hydroxynaphthalene reductase-like protein Arp2 (267 aa).

NADP(+)-binding residues include isoleucine 25, asparagine 45, aspartate 71, and asparagine 98. Residues serine 147 and serine 148 each act as proton donor in the active site. NADP(+)-binding residues include tyrosine 162, lysine 166, valine 195, and threonine 197. Tyrosine 162 functions as the Proton acceptor in the catalytic mechanism. Lysine 166 acts as the Lowers pKa of active site Tyr in catalysis.

It belongs to the short-chain dehydrogenases/reductases (SDR) family.

Functionally, hydroxynaphthalene reductase-like protein; part of the Pks2 gene cluster that mediates the formation of infectious structures (appressoria), enabling these fungi to kill insects faster. The product of the Pks2 gene cluster is different from the one of Pks1 and has still not been identified. The protein is Hydroxynaphthalene reductase-like protein Arp2 of Metarhizium acridum (strain CQMa 102).